The sequence spans 763 residues: Glycerophosphodiester phosphodiesterase GDPDL1 (763 aa).

The first 35 residues, 1–35 (MNSRPSNPTKLVIRSSTLLFCGVVLIHLFAAQIDA), serve as a signal peptide directing secretion. The Extracellular portion of the chain corresponds to 36 to 744 (QRSTSRWQTL…STIAQAPSGQ (709 aa)). In terms of domain architecture, GP-PDE 1 spans 50-350 (PLVIARGGFS…DFPITASAAV (301 aa)). Asparagine 105, asparagine 192, asparagine 248, asparagine 257, asparagine 315, asparagine 359, asparagine 430, asparagine 534, asparagine 547, and asparagine 654 each carry an N-linked (GlcNAc...) asparagine glycan. In terms of domain architecture, GP-PDE 2 spans 366–668 (FLVISKDGAS…EFPFTAARYK (303 aa)). A helical membrane pass occupies residues 745–762 (TRLKLSLLLSVFFLSLLL). Position 763 (leucine 763) is a topological domain, cytoplasmic.

Belongs to the glycerophosphoryl diester phosphodiesterase family. It depends on Ca(2+) as a cofactor. Expressed in rosette and cauline leaves, stems, flowers and siliques.

It localises to the cell membrane. It carries out the reaction a sn-glycero-3-phosphodiester + H2O = an alcohol + sn-glycerol 3-phosphate + H(+). Its function is as follows. Hydrolyzes glycerolphosphoglycerol, glycerophosphocholine and glycerophosphoethanolamine in vitro. The chain is Glycerophosphodiester phosphodiesterase GDPDL1 from Arabidopsis thaliana (Mouse-ear cress).